A 1017-amino-acid polypeptide reads, in one-letter code: Probable DNA ligase (1017 aa).

The unknown stretch occupies residues 1-363 (MPWDVKFSHG…PACATPLHAP (363 aa)). Residues 326–352 (GIRSSPPQVRAGDATPSSRSSGDAGVA) are disordered. The segment at 364–1017 (DSFARFVAAA…GARPPPAASD (654 aa)) is DNA ligase. Glutamate 667 serves as a coordination point for ATP. Lysine 669 (N6-AMP-lysine intermediate) is an active-site residue. Residues arginine 674, arginine 689, glutamate 717, arginine 860, and lysine 866 each contribute to the ATP site.

The protein in the C-terminal section; belongs to the ATP-dependent DNA ligase family. Requires Mg(2+) as cofactor.

The catalysed reaction is ATP + (deoxyribonucleotide)n-3'-hydroxyl + 5'-phospho-(deoxyribonucleotide)m = (deoxyribonucleotide)n+m + AMP + diphosphate.. In terms of biological role, DNA ligase that seals nicks in double-stranded DNA during DNA replication, DNA recombination and DNA repair. This Opitutus terrae (strain DSM 11246 / JCM 15787 / PB90-1) protein is Probable DNA ligase (lig).